The primary structure comprises 532 residues: Vesicular acetylcholine transporter unc-17 (532 aa).

The Cytoplasmic portion of the chain corresponds to 1 to 31; the sequence is MGFNVPVINRDSEILKADAKKWLEQQDNQKK. Residues 32–52 traverse the membrane as a helical segment; sequence CVLVIVSIALLLDNMLYMVIV. Residues 53–101 are Lumenal, vesicle-facing; the sequence is PIIPKYLRDIHNYQVTFEGYHNETSQLANGTYLVREVGGRINFLDEELE. N-linked (GlcNAc...) asparagine glycosylation is found at asparagine 74 and asparagine 81. Residues 102–121 traverse the membrane as a helical segment; it reads LGWLFASKALLQIFVNPFSG. The Cytoplasmic segment spans residues 122-130; sequence YIIDRVGYE. Residues 131-151 form a helical membrane-spanning segment; that stretch reads IPMILGLCTMFFSTAIFALGK. Residues 152-160 are Lumenal, vesicle-facing; sequence SYGVLLFAR. Residues 161–180 traverse the membrane as a helical segment; that stretch reads SLQGFGSAFADTSGLAMIAD. Over 181–191 the chain is Cytoplasmic; the sequence is RFTEENERSAA. The chain crosses the membrane as a helical span at residues 192-213; it reads LGIALAFISFGCLVAPPFGSVL. Over 214 to 219 the chain is Lumenal, vesicle; sequence YSLAGK. The helical transmembrane segment at 220-242 threads the bilayer; the sequence is PVPFLILSFVCLADAIAVFMVIN. Over 243-266 the chain is Cytoplasmic; that stretch reads PHRRGTDSHGEKVQGTPMWRLFMD. A helical membrane pass occupies residues 267-286; it reads PFIACCSGALIMANVSLAFL. Residues 287–303 lie on the Lumenal, vesicle side of the membrane; the sequence is EPTITTWMSEMMPDTPG. The chain crosses the membrane as a helical span at residues 304-328; sequence WLVGVIWLPPFFPHVLGVYVTVKML. Residues 329–335 lie on the Cytoplasmic side of the membrane; the sequence is RAFPHHT. The helical transmembrane segment at 336 to 356 threads the bilayer; sequence WAIAMVGLAMEGIACFAIPYT. Residues 357–367 are Lumenal, vesicle-facing; the sequence is TSVMQLVIPLS. Residues 368–388 form a helical membrane-spanning segment; the sequence is FVCFGIALIDTSLLPMLGHLV. Residues 389 to 393 lie on the Cytoplasmic side of the membrane; the sequence is DTRHV. A helical membrane pass occupies residues 394-412; that stretch reads SVYGSVYAIADISYSLAYA. At 413 to 418 the chain is on the lumenal, vesicle side; the sequence is FGPIIA. Residues 419–440 form a helical membrane-spanning segment; it reads GWIVTNWGFTALNIIIFATNVT. The Cytoplasmic segment spans residues 441–532; the sequence is YAPVLFLLRK…AGYDPLNPQW (92 aa).

The protein belongs to the major facilitator superfamily. Vesicular transporter family. In terms of tissue distribution, detected in most regions of the nervous system including the nerve ring, the ventral and dorsal nerve cords, and the pharyngeal nervous system. Expressed in most cholinergic neurons. In addition, expressed in SIA, SIB and SMB sublateral motor neurons.

The protein resides in the cytoplasmic vesicle. It is found in the secretory vesicle. It localises to the synaptic vesicle membrane. Involved in acetylcholine transport into synaptic vesicles. This Caenorhabditis elegans protein is Vesicular acetylcholine transporter unc-17.